A 75-amino-acid chain; its full sequence is Sec-independent protein translocase protein TatA (75 aa).

The chain crosses the membrane as a helical span at residues 1-21 (MGSFSIWHWLIVLVIVALVFG). Positions 44–75 (KDANSDKPAEQVTQQKVADDTIDVQAKEKTNS) are disordered.

The protein belongs to the TatA/E family. As to quaternary structure, the Tat system comprises two distinct complexes: a TatABC complex, containing multiple copies of TatA, TatB and TatC subunits, and a separate TatA complex, containing only TatA subunits. Substrates initially bind to the TatABC complex, which probably triggers association of the separate TatA complex to form the active translocon.

Its subcellular location is the cell inner membrane. Part of the twin-arginine translocation (Tat) system that transports large folded proteins containing a characteristic twin-arginine motif in their signal peptide across membranes. TatA could form the protein-conducting channel of the Tat system. The protein is Sec-independent protein translocase protein TatA of Bordetella petrii (strain ATCC BAA-461 / DSM 12804 / CCUG 43448).